A 713-amino-acid chain; its full sequence is Protein tyrosine phosphatase domain-containing protein 1 (713 aa).

Residues Tyr80–Cys251 form the Tyrosine-protein phosphatase domain. Catalysis depends on Cys188, which acts as the Phosphocysteine intermediate.

It belongs to the protein-tyrosine phosphatase family. Non-receptor class PTPDC1 subfamily.

In terms of biological role, may play roles in cilia formation and/or maintenance. The protein is Protein tyrosine phosphatase domain-containing protein 1 (ptpdc1) of Danio rerio (Zebrafish).